The chain runs to 124 residues: Small ribosomal subunit protein uS12 (124 aa).

The disordered stretch occupies residues 1–30; it reads MPTIQQLVRKGRTPKVTKTKAPALKANPQQ. Residues 9–18 show a composition bias toward basic residues; it reads RKGRTPKVTK.

It belongs to the universal ribosomal protein uS12 family. As to quaternary structure, part of the 30S ribosomal subunit. Contacts proteins S8 and S17. May interact with IF1 in the 30S initiation complex.

In terms of biological role, with S4 and S5 plays an important role in translational accuracy. Interacts with and stabilizes bases of the 16S rRNA that are involved in tRNA selection in the A site and with the mRNA backbone. Located at the interface of the 30S and 50S subunits, it traverses the body of the 30S subunit contacting proteins on the other side and probably holding the rRNA structure together. The combined cluster of proteins S8, S12 and S17 appears to hold together the shoulder and platform of the 30S subunit. In Leifsonia xyli subsp. xyli (strain CTCB07), this protein is Small ribosomal subunit protein uS12.